A 443-amino-acid polypeptide reads, in one-letter code: Glutamyl-tRNA reductase (443 aa).

Substrate is bound by residues Thr49–Arg52, Ser109, Glu114–Gln116, and Gln120. Cys50 functions as the Nucleophile in the catalytic mechanism. Gly189–Ser194 contributes to the NADP(+) binding site.

Belongs to the glutamyl-tRNA reductase family. As to quaternary structure, homodimer.

It catalyses the reaction (S)-4-amino-5-oxopentanoate + tRNA(Glu) + NADP(+) = L-glutamyl-tRNA(Glu) + NADPH + H(+). It participates in porphyrin-containing compound metabolism; protoporphyrin-IX biosynthesis; 5-aminolevulinate from L-glutamyl-tRNA(Glu): step 1/2. Its function is as follows. Catalyzes the NADPH-dependent reduction of glutamyl-tRNA(Glu) to glutamate 1-semialdehyde (GSA). The chain is Glutamyl-tRNA reductase from Staphylococcus saprophyticus subsp. saprophyticus (strain ATCC 15305 / DSM 20229 / NCIMB 8711 / NCTC 7292 / S-41).